The following is a 325-amino-acid chain: Olfactory receptor 1S1 (325 aa).

Residues 1 to 38 are Extracellular-facing; that stretch reads MKTFSSFLQIGRNMHQGNQTTITEFILLGFFKQDEHQN. Asparagine 18 carries an N-linked (GlcNAc...) asparagine glycan. A helical transmembrane segment spans residues 39-62; sequence LLFVLFLGMYLVTVIGNGLIIVAI. The Cytoplasmic portion of the chain corresponds to 63 to 70; the sequence is SLDTYLHT. The helical transmembrane segment at 71-92 threads the bilayer; the sequence is PMYLFLANLSFADISSISNSVP. Residues 93 to 113 lie on the Extracellular side of the membrane; it reads KMLVNIQTKSQSISYESCITQ. Cysteine 110 and cysteine 202 are disulfide-bonded. Residues 114 to 133 form a helical membrane-spanning segment; sequence MYFSIVFVVIDNLLLGTMAY. The Cytoplasmic segment spans residues 134 to 152; sequence DHFVAICHPLNYTILMRPR. Residues 153 to 171 traverse the membrane as a helical segment; it reads FGILLTVISWFLSNIIALT. Residues 172–208 are Extracellular-facing; it reads HTLLLIQLLFCNHNTLPHFFCDLAPLLKLSCSDTLIN. The helical transmembrane segment at 209–232 threads the bilayer; it reads ELVLFIVGLSVIIFPFTLSFFSYV. At 233–249 the chain is on the cytoplasmic side; sequence CIIRAVLRVSSTQGKWK. The chain crosses the membrane as a helical span at residues 250 to 272; it reads AFSTCGSHLTVVLLFYGTIVGVY. Residues 273–285 are Extracellular-facing; sequence FFPSSTHPEDTDK. The chain crosses the membrane as a helical span at residues 286 to 305; it reads IGAVLFTVVTPMINPFIYSL. Residues 306-325 are Cytoplasmic-facing; it reads RNKDMKGALRKLINRKISSL.

The protein belongs to the G-protein coupled receptor 1 family.

The protein localises to the cell membrane. Odorant receptor. This is Olfactory receptor 1S1 (OR1S1) from Homo sapiens (Human).